A 90-amino-acid chain; its full sequence is Small ribosomal subunit protein bS16 (90 aa).

This sequence belongs to the bacterial ribosomal protein bS16 family. As to quaternary structure, part of the 30S ribosomal subunit.

This Bacillus subtilis (strain 168) protein is Small ribosomal subunit protein bS16.